Here is a 90-residue protein sequence, read N- to C-terminus: Small ribosomal subunit protein uS15c (90 aa).

This sequence belongs to the universal ribosomal protein uS15 family. Part of the 30S ribosomal subunit.

The protein resides in the plastid. The protein localises to the chloroplast. The sequence is that of Small ribosomal subunit protein uS15c (rps15) from Platanus occidentalis (Sycamore).